The chain runs to 236 residues: 7-cyano-7-deazaguanine synthase (236 aa).

Phe-12–Leu-22 serves as a coordination point for ATP. Cys-200, Cys-215, Cys-218, and Cys-221 together coordinate Zn(2+).

It belongs to the QueC family. Requires Zn(2+) as cofactor.

It catalyses the reaction 7-carboxy-7-deazaguanine + NH4(+) + ATP = 7-cyano-7-deazaguanine + ADP + phosphate + H2O + H(+). It functions in the pathway purine metabolism; 7-cyano-7-deazaguanine biosynthesis. Catalyzes the ATP-dependent conversion of 7-carboxy-7-deazaguanine (CDG) to 7-cyano-7-deazaguanine (preQ(0)). The protein is 7-cyano-7-deazaguanine synthase of Bradyrhizobium sp. (strain ORS 278).